Here is a 496-residue protein sequence, read N- to C-terminus: Genome polyprotein (496 aa).

At 1-447 (SRCTHLENRD…HTVLGGAFNS (447 aa)) the chain is on the extracellular side. Disulfide bonds link Cys3–Cys30, Cys60–Cys116, Cys60–Cys121, Cys74–Cys105, Cys92–Cys116, and Cys92–Cys121. A fusion peptide region spans residues 98–111 (DRGWGNHCGLFGKG). Residue Asn154 is glycosylated (N-linked (GlcNAc...) asparagine; by host). Cystine bridges form between Cys186-Cys290 and Cys307-Cys338. A helical transmembrane segment spans residues 448 to 468 (IFGGVGFLPKLLMGVALAWLG). Residues 469-479 (LNTRNPTMSMS) lie on the Cytoplasmic side of the membrane. The chain crosses the membrane as a helical span at residues 480 to 496 (FLMAGGLVLAMTLGVGA).

Homodimer; in the endoplasmic reticulum and Golgi. N-glycosylated.

Its subcellular location is the virion membrane. The protein resides in the host endoplasmic reticulum membrane. In terms of biological role, binds to host cell surface receptor and mediates fusion between viral and cellular membranes. Envelope protein is synthesized in the endoplasmic reticulum in the form of heterodimer with protein prM. They play a role in virion budding in the ER, and the newly formed immature particle is covered with 60 spikes composed of heterodimer between precursor prM and envelope protein E. The virion is transported to the Golgi apparatus where the low pH causes dissociation of PrM-E heterodimers and formation of E homodimers. prM-E cleavage is ineficient, and many virions are only partially matured. These uncleaved prM would play a role in immune evasion. This chain is Genome polyprotein, found in Bos taurus (Bovine).